The following is a 149-amino-acid chain: Calmodulin (149 aa).

The residue at position 2 (alanine 2) is an N-acetylalanine. EF-hand domains lie at 8–43, 44–79, 81–116, and 117–149; these read EQIA…LGQN, PTEA…KMKD, DTEE…LGEK, and LTDE…MMAK. Positions 21, 23, 25, 27, 32, 57, 59, 61, 63, 68, 94, 96, 98, and 105 each coordinate Ca(2+). Position 116 is an N6,N6,N6-trimethyllysine (lysine 116). Residues aspartate 130, aspartate 132, aspartate 134, histidine 136, and glutamate 141 each contribute to the Ca(2+) site.

It belongs to the calmodulin family.

Calmodulin mediates the control of a large number of enzymes, ion channels and other proteins by Ca(2+). Among the enzymes to be stimulated by the calmodulin-Ca(2+) complex are a number of protein kinases and phosphatases. The protein is Calmodulin of Tetrahymena pyriformis.